The chain runs to 259 residues: MLDSVASKPELAELLTLTKTEQILRLAQINVELEQLSAQERVKWALENLEGEFAVSSSFGIQAAVMLHLVTQQKPDIPIILTDTGYLFAETYQFIDQLKAQLNLNLKVYRAKESANWQEARYGKLWEQGIEGIEKYNKINKVEPMRRALREQNVGTWFSGLRREQSQSRAGLPILSIQNGVFKFLPVIDWTNKDVHYYLEEHGLSYHPLWEQGYLSVGDTHTSRKWEPGMSEEETRFFGLKRECGLHEDDGSEQDGSGI.

C244 functions as the Nucleophile; cysteine thiosulfonate intermediate in the catalytic mechanism.

Belongs to the PAPS reductase family. CysH subfamily.

The protein resides in the cytoplasm. The catalysed reaction is [thioredoxin]-disulfide + sulfite + adenosine 3',5'-bisphosphate + 2 H(+) = [thioredoxin]-dithiol + 3'-phosphoadenylyl sulfate. Its pathway is sulfur metabolism; hydrogen sulfide biosynthesis; sulfite from sulfate: step 3/3. Functionally, catalyzes the formation of sulfite from phosphoadenosine 5'-phosphosulfate (PAPS) using thioredoxin as an electron donor. The protein is Phosphoadenosine 5'-phosphosulfate reductase of Vibrio campbellii (strain ATCC BAA-1116).